The chain runs to 640 residues: F-box protein MET30 (640 aa).

Basic and acidic residues predominate over residues 1 to 19 (MRRERQRMMSFEDKDKDDL). A disordered region spans residues 1–84 (MRRERQRMMS…ATNDSGTRVQ (84 aa)). Residues 1–299 (MRRERQRMMS…KGHCRIQEFK (299 aa)) form a necessary to mediate nuclear localization region. Polar residues-rich tracts occupy residues 45–56 (TGSSDDLAQGSS) and 64–82 (ATRSPSSSPDLATNDSGTR). A Phosphoserine modification is found at serine 67. The interval 180–225 (KIDFISILPQELSLKILSYLDCQSLCNATRVCRKWQKLADDDRVWY) is interaction with SKP1/CBF3D. The important for mediating homomultimerization stretch occupies residues 180-277 (KIDFISILPQ…TQTTRPWKVI (98 aa)). Positions 181–227 (IDFISILPQELSLKILSYLDCQSLCNATRVCRKWQKLADDDRVWYHM) constitute an F-box domain. Residues 277–640 (IYRERFKVES…VKMYKFDLND (364 aa)) form an interaction with MET4 region. WD repeat units follow at residues 300–328 (GHMDGVLTLQFNYRLLFTGSYDSTIGIWD), 340–368 (GHSDGVKTLYFDDRKLITGSLDKTIRVWN), 380–408 (GHSDSVLSVDSYQKVIVSGSADKTVKVWH), 419–449 (GHTEWVNCVKLHPKSFSCFSCSDDTTIRMWD), 461–499 (GHVGQVQKIIPLTIKDVENLATDNTSDGSSPQDDPTMTD), 509–538 (NEQETVLDENIPYPTHLLSCGLDNTIKLWD), 550–578 (GHVEGVWDIAADNFRIISGSHDGSIKVWD), and 607–635 (DKVAPIACVCIGDSECFSGDEFGCVKMYK). Polar residues predominate over residues 481-495 (ATDNTSDGSSPQDDP). Positions 481 to 516 (ATDNTSDGSSPQDDPTMTDGADESDTPSNEQETVLD) are disordered.

This sequence belongs to the WD repeat MET30/SCONB/SCON-2 family. Homomultimer. Interacts with CDC53 and SKP1/CBF3D to form the E3 ubiquitin ligase complex SCF(Met30). Interacts with MET4.

It localises to the cytoplasm. The protein resides in the nucleus. The protein operates within protein modification; protein ubiquitination. Substrate-recognition component of the SCF(Met30) complex, an E3 ubiquitin ligase complex that mediates the ubiquitination and subsequent proteasomal degradation of target proteins. Negatively regulates sulfur amino acids biosynthesis genes expression. Controls cell cycle function (being required for the G1/S transition and M-phase but not the S-phase), sulfur metabolism, and methionine biosynthesis as part of the SCF(Met30) complex. Required for the efficient binding of CDC45 and MCM proteins to origins of replication. Required for efficient expression of G1 cyclins. The SCF(Met30) complex catalyzes ubiquitination and degradation of the Cdk-inhibitory kinase SWE1. Involved in the S-adenosylmethionine (AdoMet)-mediated inhibition of the transcription function of MET4. The SCF(Met30) complex mediates ubiquitination and subsequent degradation of MET4 and the cellular response to cadmium. The SCF(Met30) complex acts as an inhibitor of autophagy by promoting ubiquitination and degradation of ATG9 in normal conditions. This is F-box protein MET30 from Saccharomyces cerevisiae (strain ATCC 204508 / S288c) (Baker's yeast).